A 352-amino-acid polypeptide reads, in one-letter code: Phosphatase Herzog (352 aa).

The prion-like domain necessary for both protein assembly and membrane targeting stretch occupies residues 1-102 (MDATSIITQV…PLPDQQRYLL (102 aa)). The segment at 103-267 (PQVRLTDMHR…ELIPLFEKLS (165 aa)) is mediates substrate recognition. An FCP1 homology domain is found at 108-266 (TDMHRKCMVI…RELIPLFEKL (159 aa)). Disordered stretches follow at residues 284–310 (NNQT…LQQQ) and 332–352 (TMLN…LQKT).

In terms of assembly, monomer. Forms higher-order protein aggregates with amyloid-like features during gastrulation. Interacts with babo, dah, Irk1, pch2, Ras64B, sax and Src64B.

It localises to the cell membrane. It carries out the reaction O-phospho-L-seryl-[protein] + H2O = L-seryl-[protein] + phosphate. Phosphatase activity requires amyloid-like aggregation on the membrane. Functionally, prion-like membrane-associated phosphatase. Phosphatase activity depends on amyloid-like assembly at the membrane. Might have a role in establishment of segment polarity in embryos. The protein is Phosphatase Herzog of Drosophila melanogaster (Fruit fly).